Here is a 290-residue protein sequence, read N- to C-terminus: HTH-type transcriptional activator RhaR (290 aa).

One can recognise an HTH araC/xylS-type domain in the interval 179–277; sequence DLIMSALQQS…GMTPRDYRQR (99 aa). DNA-binding regions (H-T-H motif) lie at residues 196-217 and 244-267; these read ANFC…RQQT and ISDI…TREA.

In terms of assembly, binds DNA as a dimer.

The protein localises to the cytoplasm. Functionally, activates expression of the rhaSR operon in response to L-rhamnose. In Yersinia pseudotuberculosis serotype O:3 (strain YPIII), this protein is HTH-type transcriptional activator RhaR.